The sequence spans 259 residues: Eukaryotic translation initiation factor 3 subunit J (259 aa).

A sufficient for interaction with EIF3B region spans residues 1–70; that stretch reads MAAAAAAAAG…KEEAEVKPEV (70 aa). The tract at residues 1–111 is disordered; sequence MAAAAAAAAG…EPEESKVLTP (111 aa). 3 positions are modified to phosphoserine: Ser12, Ser14, and Ser21. The span at 41-62 shows a compositional bias: acidic residues; the sequence is EGEDEDEDVKDNWDDDDDENKE. Basic and acidic residues predominate over residues 63–107; the sequence is EAEVKPEVKISEKKKIAEKIKEKERQQKKRQEEIKKRLEEPEESK. Positions 71 to 136 form a coiled coil; the sequence is KISEKKKIAE…ESDLELAKET (66 aa). Lys107 participates in a covalent cross-link: Glycyl lysine isopeptide (Lys-Gly) (interchain with G-Cter in SUMO2). Phosphothreonine is present on Thr110. A Phosphoserine modification is found at Ser128. A disordered region spans residues 218–247; sequence SKAKKKKKGVVPGGGLKATMKDDLADYGGY. The segment at 244-259 is promotes stable association with the 40S ribosome; sequence YGGYDGGYVQDYEDFM. Position 255 is a phosphotyrosine (Tyr255).

The protein belongs to the eIF-3 subunit J family. As to quaternary structure, component of the eukaryotic translation initiation factor 3 (eIF-3) complex, which is composed of 13 subunits: EIF3A, EIF3B, EIF3C, EIF3D, EIF3E, EIF3F, EIF3G, EIF3H, EIF3I, EIF3J, EIF3K, EIF3L and EIF3M. The eIF-3 complex appears to include 3 stable modules: module A is composed of EIF3A, EIF3B, EIF3G and EIF3I; module B is composed of EIF3F, EIF3H, and EIF3M; and module C is composed of EIF3C, EIF3D, EIF3E, EIF3K and EIF3L. EIF3C of module C binds EIF3B of module A and EIF3H of module B, thereby linking the three modules. EIF3J is a labile subunit that binds to the eIF-3 complex via EIF3B. The eIF-3 complex interacts with RPS6KB1 under conditions of nutrient depletion. Mitogenic stimulation leads to binding and activation of a complex composed of MTOR and RPTOR, leading to phosphorylation and release of RPS6KB1 and binding of EIF4B to eIF-3. Post-translationally, phosphorylated. Phosphorylation is enhanced upon serum stimulation.

Its subcellular location is the cytoplasm. Its function is as follows. Component of the eukaryotic translation initiation factor 3 (eIF-3) complex, which is required for several steps in the initiation of protein synthesis. The eIF-3 complex associates with the 40S ribosome and facilitates the recruitment of eIF-1, eIF-1A, eIF-2:GTP:methionyl-tRNAi and eIF-5 to form the 43S pre-initiation complex (43S PIC). The eIF-3 complex stimulates mRNA recruitment to the 43S PIC and scanning of the mRNA for AUG recognition. The eIF-3 complex is also required for disassembly and recycling of post-termination ribosomal complexes and subsequently prevents premature joining of the 40S and 60S ribosomal subunits prior to initiation. The eIF-3 complex specifically targets and initiates translation of a subset of mRNAs involved in cell proliferation, including cell cycling, differentiation and apoptosis, and uses different modes of RNA stem-loop binding to exert either translational activation or repression. This subunit binds directly within the mRNA entry channel of the 40S ribosome to the aminoacyl (A) site. It may regulate the interaction between the 43S PIC and mRNA. This Rattus norvegicus (Rat) protein is Eukaryotic translation initiation factor 3 subunit J (Eif3j).